Here is a 404-residue protein sequence, read N- to C-terminus: Cysteine desulfurase IscS (404 aa).

Residues 73–74 (AT), Asn153, Gln181, and 201–203 (SAH) each bind pyridoxal 5'-phosphate. An N6-(pyridoxal phosphate)lysine modification is found at Lys204. A pyridoxal 5'-phosphate-binding site is contributed by Thr241. Cys327 serves as the catalytic Cysteine persulfide intermediate. Position 327 (Cys327) interacts with [2Fe-2S] cluster.

The protein belongs to the class-V pyridoxal-phosphate-dependent aminotransferase family. NifS/IscS subfamily. In terms of assembly, homodimer. Forms a heterotetramer with IscU, interacts with other sulfur acceptors. The cofactor is pyridoxal 5'-phosphate.

The protein resides in the cytoplasm. It catalyses the reaction (sulfur carrier)-H + L-cysteine = (sulfur carrier)-SH + L-alanine. It functions in the pathway cofactor biosynthesis; iron-sulfur cluster biosynthesis. Functionally, master enzyme that delivers sulfur to a number of partners involved in Fe-S cluster assembly, tRNA modification or cofactor biosynthesis. Catalyzes the removal of elemental sulfur atoms from cysteine to produce alanine. Functions as a sulfur delivery protein for Fe-S cluster synthesis onto IscU, an Fe-S scaffold assembly protein, as well as other S acceptor proteins. This chain is Cysteine desulfurase IscS, found in Anaeromyxobacter sp. (strain Fw109-5).